The sequence spans 374 residues: Alanine racemase (374 aa).

Residue lysine 44 is the Proton acceptor; specific for D-alanine of the active site. Residue lysine 44 is modified to N6-(pyridoxal phosphate)lysine. Substrate is bound at residue arginine 139. Tyrosine 269 functions as the Proton acceptor; specific for L-alanine in the catalytic mechanism. A substrate-binding site is contributed by methionine 317.

This sequence belongs to the alanine racemase family. The cofactor is pyridoxal 5'-phosphate.

It carries out the reaction L-alanine = D-alanine. The protein operates within amino-acid biosynthesis; D-alanine biosynthesis; D-alanine from L-alanine: step 1/1. Functionally, catalyzes the interconversion of L-alanine and D-alanine. May also act on other amino acids. The protein is Alanine racemase (alr) of Bordetella avium (strain 197N).